The chain runs to 356 residues: tRNA-specific 2-thiouridylase MnmA 1 (356 aa).

ATP contacts are provided by residues 8–15 and Met-34; that span reads GMSGGVDS. The active-site Nucleophile is Cys-103. An intrachain disulfide couples Cys-103 to Cys-199. Gly-127 provides a ligand contact to ATP. The interval 149-151 is interaction with tRNA; sequence KDQ. Cys-199 serves as the catalytic Cysteine persulfide intermediate. The interval 305–306 is interaction with tRNA; sequence RY.

Belongs to the MnmA/TRMU family.

The protein resides in the cytoplasm. The enzyme catalyses S-sulfanyl-L-cysteinyl-[protein] + uridine(34) in tRNA + AH2 + ATP = 2-thiouridine(34) in tRNA + L-cysteinyl-[protein] + A + AMP + diphosphate + H(+). In terms of biological role, catalyzes the 2-thiolation of uridine at the wobble position (U34) of tRNA, leading to the formation of s(2)U34. The protein is tRNA-specific 2-thiouridylase MnmA 1 of Clostridium botulinum (strain Loch Maree / Type A3).